The following is a 210-amino-acid chain: Calaxin (210 aa).

EF-hand domains follow at residues 64-99, 100-135, and 145-180; these read TDDM…FLRG, TLDE…SLIR, and GIKD…ENLL. Asp-77, Asp-79, Asp-81, Tyr-83, Glu-88, Asp-113, Asn-115, Asp-117, Tyr-119, Glu-124, Asp-158, Asp-160, Asp-162, Arg-164, and Asp-169 together coordinate Ca(2+).

In terms of assembly, component of the outer dynein arm-docking complex along with ODAD1, ODAD2, ODAD3 and ODAD4.

The protein localises to the cytoplasm. It localises to the cytoskeleton. It is found in the cilium axoneme. Its subcellular location is the cell projection. The protein resides in the cilium. The protein localises to the flagellum. Its function is as follows. Component of the outer dynein arm-docking complex (ODA-DC) that mediates outer dynein arms (ODA) binding onto the doublet microtubule. Seems to regulate the assembly of both ODAs and their axonemal docking complex onto ciliary microtubules. Regulates ciliary and flagellar motility and is required for cilia-driven determination of body laterality. In terms of biological role, regulates ciliary motility and is required for cilia-driven determination of body laterality. This is Calaxin (clxn) from Danio rerio (Zebrafish).